The primary structure comprises 88 residues: Small ribosomal subunit protein uS15 (88 aa).

This sequence belongs to the universal ribosomal protein uS15 family. In terms of assembly, part of the 30S ribosomal subunit. Forms a bridge to the 50S subunit in the 70S ribosome, contacting the 23S rRNA.

One of the primary rRNA binding proteins, it binds directly to 16S rRNA where it helps nucleate assembly of the platform of the 30S subunit by binding and bridging several RNA helices of the 16S rRNA. In terms of biological role, forms an intersubunit bridge (bridge B4) with the 23S rRNA of the 50S subunit in the ribosome. The protein is Small ribosomal subunit protein uS15 of Variovorax paradoxus (strain S110).